The primary structure comprises 235 residues: TVP38/TMEM64 family inner membrane protein YdjZ (235 aa).

The Periplasmic portion of the chain corresponds to 1–13 (MMMMQSRKIWYYR). The helical transmembrane segment at 14-34 (ITLIILLFAMLLAWALLPGVH) threads the bilayer. Topologically, residues 35–64 (EFINRSVAAFAAVDQQGIERFIQSYGALAA) are cytoplasmic. A helical transmembrane segment spans residues 65–85 (VVSFLLMILQAIAAPLPAFLI). The Periplasmic segment spans residues 86–95 (TFANASLFGA). Residues 90–199 (ASLFGAFWGG…IVYSWAGSML (110 aa)) form a VTT domain region. A helical membrane pass occupies residues 96–116 (FWGGLLSWTSSMAGAALCFFI). Residues 117-176 (ARVMGREVVEKLTGKTVLDSMDGFFTRYGKHTILVCRLLPFVPFDPISYAAGLTSIRFRS) are Cytoplasmic-facing. The chain crosses the membrane as a helical span at residues 177–197 (FFIATGLGQLPATIVYSWAGS). At 198–202 (MLTGG) the chain is on the periplasmic side. Residues 203–223 (TFWFVTGLFILFALTVVIFMA) traverse the membrane as a helical segment. Topologically, residues 224–235 (KKIWLERQKRNA) are cytoplasmic.

The protein belongs to the TVP38/TMEM64 family.

The protein resides in the cell inner membrane. The sequence is that of TVP38/TMEM64 family inner membrane protein YdjZ (ydjZ) from Escherichia coli (strain K12).